Here is a 1029-residue protein sequence, read N- to C-terminus: 2-oxoglutarate dehydrogenase, mitochondrial (1029 aa).

Residues Arg-317, Asp-415, Asn-448, Ile-450, and Gln-676 each contribute to the thiamine diphosphate site. Asp-415, Asn-448, and Ile-450 together coordinate Mg(2+).

The protein belongs to the alpha-ketoglutarate dehydrogenase family. In terms of assembly, homodimer. Component of the 2-oxoglutarate dehydrogenase complex. It depends on thiamine diphosphate as a cofactor. Requires Mg(2+) as cofactor.

The protein localises to the mitochondrion matrix. The enzyme catalyses N(6)-[(R)-lipoyl]-L-lysyl-[protein] + 2-oxoglutarate + H(+) = N(6)-[(R)-S(8)-succinyldihydrolipoyl]-L-lysyl-[protein] + CO2. Its function is as follows. The 2-oxoglutarate dehydrogenase complex catalyzes the overall conversion of 2-oxoglutarate to succinyl-CoA and CO(2). It contains multiple copies of three enzymatic components: 2-oxoglutarate dehydrogenase (E1), dihydrolipoamide succinyltransferase (E2) and lipoamide dehydrogenase (E3). This chain is 2-oxoglutarate dehydrogenase, mitochondrial (ogdh-1), found in Caenorhabditis elegans.